A 102-amino-acid polypeptide reads, in one-letter code: MIPGQYQIQPGDIELNAGRRTHSLTVANSGDRPIQVGSHFHFFETNDALTFDRAASRGMRLNIPAGTAVRFEPGQSREVELVDLAGLREVYGFAGRVMGALD.

Belongs to the urease beta subunit family. Heterotrimer of UreA (gamma), UreB (beta) and UreC (alpha) subunits. Three heterotrimers associate to form the active enzyme.

The protein localises to the cytoplasm. It carries out the reaction urea + 2 H2O + H(+) = hydrogencarbonate + 2 NH4(+). It functions in the pathway nitrogen metabolism; urea degradation; CO(2) and NH(3) from urea (urease route): step 1/1. In Pseudomonas syringae pv. tomato (strain ATCC BAA-871 / DC3000), this protein is Urease subunit beta.